Here is a 152-residue protein sequence, read N- to C-terminus: UPF0225 protein Ent638_2310 (152 aa).

This sequence belongs to the UPF0225 family.

The chain is UPF0225 protein Ent638_2310 from Enterobacter sp. (strain 638).